The following is a 214-amino-acid chain: Large ribosomal subunit protein uL3 (214 aa).

Residues 119–159 (GVKRHGFAGGPKTHGQSDRHRAPGSIGPTTDPGRVHKGKRM) are disordered.

It belongs to the universal ribosomal protein uL3 family. In terms of assembly, part of the 50S ribosomal subunit. Forms a cluster with proteins L14 and L19.

In terms of biological role, one of the primary rRNA binding proteins, it binds directly near the 3'-end of the 23S rRNA, where it nucleates assembly of the 50S subunit. The polypeptide is Large ribosomal subunit protein uL3 (Thermomicrobium roseum (strain ATCC 27502 / DSM 5159 / P-2)).